Here is an 88-residue protein sequence, read N- to C-terminus: MSGSGSGSGAGHGGGSGGSIREAGGSLGMMGATREEEYFRRQQKDQLDNLKKKLEADMTQSQQEIRDHEKVLEQHQQRLKEIEKGHGT.

Positions 1–18 (MSGSGSGSGAGHGGGSGG) are enriched in gly residues. Residues 1 to 41 (MSGSGSGSGAGHGGGSGGSIREAGGSLGMMGATREEEYFRR) form a disordered region. Positions 39–87 (FRRQQKDQLDNLKKKLEADMTQSQQEIRDHEKVLEQHQQRLKEIEKGHG) form a coiled coil.

The protein belongs to the ATPase inhibitor family. Post-translationally, does not seem to include a transit peptide.

Its subcellular location is the mitochondrion. In terms of biological role, thought to be a regulatory component of the ATP-synthesizing complex in the mitochondria. The polypeptide is ATPase inhibitor mai-1, mitochondrial (mai-1) (Caenorhabditis elegans).